The following is a 126-amino-acid chain: Non-specific lipid-transfer protein 13 (126 aa).

The signal sequence occupies residues 1-20; that stretch reads MDTHTTKLVAISLLLLLVIS. 4 disulfides stabilise this stretch: Cys36-Cys85, Cys46-Cys61, Cys62-Cys109, and Cys83-Cys123.

This sequence belongs to the plant LTP family.

In terms of biological role, plant non-specific lipid-transfer proteins transfer phospholipids as well as galactolipids across membranes. May play a role in wax or cutin deposition in the cell walls of expanding epidermal cells and certain secretory tissues. This chain is Non-specific lipid-transfer protein 13 (LTP13), found in Arabidopsis thaliana (Mouse-ear cress).